We begin with the raw amino-acid sequence, 523 residues long: Peptide chain release factor 3 (523 aa).

Residues 10 to 277 (NKRRTFAIIS…QFVDLAPAPG (268 aa)) enclose the tr-type G domain. GTP is bound by residues 19–26 (SHPDAGKT), 87–91 (DTPGH), and 141–144 (NKLD).

Belongs to the TRAFAC class translation factor GTPase superfamily. Classic translation factor GTPase family. PrfC subfamily.

It is found in the cytoplasm. Increases the formation of ribosomal termination complexes and stimulates activities of RF-1 and RF-2. It binds guanine nucleotides and has strong preference for UGA stop codons. It may interact directly with the ribosome. The stimulation of RF-1 and RF-2 is significantly reduced by GTP and GDP, but not by GMP. The sequence is that of Peptide chain release factor 3 from Lactobacillus delbrueckii subsp. bulgaricus (strain ATCC BAA-365 / Lb-18).